The chain runs to 351 residues: Protein FAM118B (351 aa).

The residue at position 2 (Ala-2) is an N-acetylalanine. Ser-9 is modified (phosphoserine).

This sequence belongs to the FAM118 family.

The protein resides in the nucleus. It is found in the cajal body. May play a role in Cajal bodies formation. This Homo sapiens (Human) protein is Protein FAM118B (FAM118B).